A 209-amino-acid polypeptide reads, in one-letter code: Dephospho-CoA kinase (209 aa).

The DPCK domain occupies 13 to 209; that stretch reads RIGLTGGIAT…AIEKVVVAEN (197 aa). Residue 21–26 coordinates ATP; it reads ATGKST.

It belongs to the CoaE family.

It is found in the cytoplasm. The enzyme catalyses 3'-dephospho-CoA + ATP = ADP + CoA + H(+). It participates in cofactor biosynthesis; coenzyme A biosynthesis; CoA from (R)-pantothenate: step 5/5. Functionally, catalyzes the phosphorylation of the 3'-hydroxyl group of dephosphocoenzyme A to form coenzyme A. This is Dephospho-CoA kinase from Synechococcus elongatus (strain ATCC 33912 / PCC 7942 / FACHB-805) (Anacystis nidulans R2).